Reading from the N-terminus, the 203-residue chain is Small ribosomal subunit protein uS4 (203 aa).

One can recognise an S4 RNA-binding domain in the interval 93 to 153 (RRLDNIVYRL…DKSKNLQQVK (61 aa)).

The protein belongs to the universal ribosomal protein uS4 family. Part of the 30S ribosomal subunit. Contacts protein S5. The interaction surface between S4 and S5 is involved in control of translational fidelity.

Functionally, one of the primary rRNA binding proteins, it binds directly to 16S rRNA where it nucleates assembly of the body of the 30S subunit. In terms of biological role, with S5 and S12 plays an important role in translational accuracy. The protein is Small ribosomal subunit protein uS4 of Lactobacillus gasseri (strain ATCC 33323 / DSM 20243 / BCRC 14619 / CIP 102991 / JCM 1131 / KCTC 3163 / NCIMB 11718 / NCTC 13722 / AM63).